The chain runs to 488 residues: Glutamyl-tRNA(Gln) amidotransferase subunit A (488 aa).

Catalysis depends on charge relay system residues lysine 77 and serine 152. Serine 176 (acyl-ester intermediate) is an active-site residue.

Belongs to the amidase family. GatA subfamily. In terms of assembly, heterotrimer of A, B and C subunits.

The enzyme catalyses L-glutamyl-tRNA(Gln) + L-glutamine + ATP + H2O = L-glutaminyl-tRNA(Gln) + L-glutamate + ADP + phosphate + H(+). Allows the formation of correctly charged Gln-tRNA(Gln) through the transamidation of misacylated Glu-tRNA(Gln) in organisms which lack glutaminyl-tRNA synthetase. The reaction takes place in the presence of glutamine and ATP through an activated gamma-phospho-Glu-tRNA(Gln). The polypeptide is Glutamyl-tRNA(Gln) amidotransferase subunit A (Streptococcus gordonii (strain Challis / ATCC 35105 / BCRC 15272 / CH1 / DL1 / V288)).